Reading from the N-terminus, the 867-residue chain is G-protein coupled receptor family C group 6 member A (867 aa).

Positions 1-19 (MDLMSFILLWAGLMKVAEA) are cleaved as a signal peptide. At 20 to 566 (SIAQFSQLGA…EYFDWNSGFA (547 aa)) the chain is on the extracellular side. Asn-51, Asn-55, Asn-97, Asn-296, Asn-308, Asn-336, Asn-356, Asn-370, Asn-527, and Asn-547 each carry an N-linked (GlcNAc...) asparagine glycan. Residues 567–587 (IVLLILAALGVLLLFFMSALF) traverse the membrane as a helical segment. The Cytoplasmic portion of the chain corresponds to 588–602 (FWQRHSPVVKAAGGP). A helical membrane pass occupies residues 603-623 (LCHLILVSLLGSFISVVFFVG). Over 624–634 (EPSDLTCRARQ) the chain is Extracellular. A helical membrane pass occupies residues 635–655 (VIFGFSFTLCVSCILVKSLKI). The Cytoplasmic segment spans residues 656-675 (LLAFEMNFELKELLCMLYKP). The chain crosses the membrane as a helical span at residues 676 to 696 (YMIVSVGMGVQIIICTVWLTL). At 697-716 (YKPFKDKEVQTESILLECNE) the chain is on the extracellular side. A helical membrane pass occupies residues 717 to 737 (GFYVMFWLMLGYIALLALFCF). At 738–754 (TFAYIGRKLPQKYNEAK) the chain is on the cytoplasmic side. Residues 755 to 775 (FITFSMVICLMAWIIFIPIHV) traverse the membrane as a helical segment. Topologically, residues 776–781 (TTSGKY) are extracellular. Residues 782–802 (VPAVEMVVILISNYGILSCHF) form a helical membrane-spanning segment. Residues 803–867 (LPKSYIILFK…LSFVPEEKHE (65 aa)) lie on the Cytoplasmic side of the membrane.

The protein belongs to the G-protein coupled receptor 3 family. As to quaternary structure, homodimer; disulfide-linked.

It localises to the cell membrane. Functionally, olfactory receptor that is activated by amino acids that act as potent odorants in fish. Displays preference for acidic amino acids such as Glu over basic amino acids. The protein is G-protein coupled receptor family C group 6 member A (gprc6a) of Danio rerio (Zebrafish).